The sequence spans 340 residues: Very-long-chain 3-oxoacyl-CoA reductase (340 aa).

The helical transmembrane segment at 23-43 (LQYTFAALGALYVLRGALSFV) threads the bilayer. NADP(+)-binding residues include valine 68, arginine 109, aspartate 123, aspartate 131, asparagine 150, lysine 185, tyrosine 217, lysine 221, valine 250, and threonine 252. The Proton donor role is filled by tyrosine 217. Lysine 221 serves as the catalytic Lowers pKa of active site Tyr.

The protein belongs to the short-chain dehydrogenases/reductases (SDR) family.

It localises to the endoplasmic reticulum membrane. It catalyses the reaction a very-long-chain (3R)-3-hydroxyacyl-CoA + NADP(+) = a very-long-chain 3-oxoacyl-CoA + NADPH + H(+). The protein operates within lipid metabolism; fatty acid biosynthesis. Functionally, component of the microsomal membrane bound fatty acid elongation system, which produces the 26-carbon very long-chain fatty acids (VLCFA) from palmitate. Catalyzes the reduction of the 3-ketoacyl-CoA intermediate that is formed in each cycle of fatty acid elongation. VLCFAs serve as precursors for ceramide and sphingolipids. In Podospora anserina (strain S / ATCC MYA-4624 / DSM 980 / FGSC 10383) (Pleurage anserina), this protein is Very-long-chain 3-oxoacyl-CoA reductase.